The primary structure comprises 2457 residues: Highly reducing polyketide synthase ACTTS3 (2457 aa).

A Ketosynthase family 3 (KS3) domain is found at 5–435; the sequence is REPIAVIGSA…GTNAHVILES (431 aa). Active-site for beta-ketoacyl synthase activity residues include Cys179, His316, and His356. The malonyl-CoA:ACP transacylase (MAT) domain stretch occupies residues 545–856; it reads RVLGIFTGQG…VMEAVLESSP (312 aa). The For malonyltransferase activity role is filled by Ser641. The interval 938 to 1078 is N-terminal hotdog fold; the sequence is HELLGRRTAD…GRIIIHLGSG (141 aa). The interval 938–1244 is dehydratase (DH) domain; that stretch reads HELLGRRTAD…LSLKSVAEPT (307 aa). Residues 938–1246 enclose the PKS/mFAS DH domain; the sequence is HELLGRRTAD…LKSVAEPTEE (309 aa). The active-site Proton acceptor; for dehydratase activity is His970. Residues 1091 to 1246 form a C-terminal hotdog fold region; it reads TDLSPVDLDR…LKSVAEPTEE (156 aa). Asp1152 (proton donor; for dehydratase activity) is an active-site residue. The interval 1399–1587 is methyltransferase (CMet) domain; it reads ETMNNCIARA…DVFYDFPDRS (189 aa). The tract at residues 2085 to 2281 is ketoreductase (KR) domain; sequence FLPDKTYLMI…SDRHIENHLR (197 aa). The 78-residue stretch at 2374 to 2451 folds into the Carrier domain; the sequence is DVTTVFQQAF…EISIDATKKY (78 aa). The residue at position 2411 (Ser2411) is an O-(pantetheine 4'-phosphoryl)serine.

It depends on pantetheine 4'-phosphate as a cofactor.

Its pathway is mycotoxin biosynthesis. In terms of biological role, highly reducing polyketide synthase; part of the gene clusters that mediate the biosynthesis of the host-selective toxins (HSTs) ACT-toxins responsible for brown spot of tangerine disease by the tangerine pathotype which affects tangerines and mandarins. ACT-toxins consist of three moieties, 9,10-epoxy-8-hydroxy-9-methyl-decatrienoic acid (EDA), valine and a polyketide. ACT-toxin I is toxic to both citrus and pear; toxin II the 5''-deoxy derivative of ACT-toxin I, is highly toxic to pear and slightly toxic to citrus. On cellular level, ACT-toxins affect plasma membrane of susceptible cells and cause a sudden increase in loss of K(+) after a few minutes of toxin treatment. The acyl-CoA ligase ACTT1, the hydrolase ACTT2, the enoyl-CoA hydratases ACTT3 and ACTT6, and the acyl-CoA synthetase ACTT5 are all involved in the biosynthesis of the AK-, AF- and ACT-toxin common 9,10-epoxy-8-hydroxy-9-methyl-decatrienoic acid (EDA) structural moiety. The exact role of each enzyme, and of additional enzymes identified within the AF-toxin clusters have still to be determined. On the other hand, ACTTS1 to ACTTS4 are specific to the tangerine pathotype. The function of ACTTS3 is to elongate the polyketide chain portion of ACT-toxin that is unique to this toxin. The enoyl-reductase ACTTS2 might complement the missing enoyl-reductase (ER) domain in ACTTS3 in the synthesis of the polyketide portion of ACT-toxin. The roles of the nonribosomal peptide synthetases-related proteins ACTTS1 and ACTTS4 have also still not been elucidated. The polypeptide is Highly reducing polyketide synthase ACTTS3 (Alternaria alternata (Alternaria rot fungus)).